Consider the following 269-residue polypeptide: MTHLERSRHQQYPYHMVLPSPWPMLLSFALLSLTLSLGLTMHGYIGNMNLVYLALLVVTLTSVFWFRDVIAEATYLGDHTIAVRKGINLGFLLFVLSEVLIFAGLFWAYFHSAMSPDIVLGASWPPVGIQAVQPTELPLLNTIILLSSGATITYSHHALICRNRNKALSGLFITIWLIIIFVTCQYIEYTNAAFTISDGVYGSVFYAGTGLHFLHMVMLAVMLIICYWRMRTYQFTSTHHVGFETTILYCHVLDIIWLFLYIVFYWWGV.

Helical transmembrane passes span 21 to 41, 45 to 65, 90 to 110, 138 to 160, 167 to 187, 205 to 225, and 247 to 267; these read PWPMLLSFALLSLTLSLGLTM, IGNMNLVYLALLVVTLTSVFW, GFLLFVLSEVLIFAGLFWAYF, PLLNTIILLSSGATITYSHHALI, ALSGLFITIWLIIIFVTCQYI, FYAGTGLHFLHMVMLAVMLII, and ILYCHVLDIIWLFLYIVFYWW.

This sequence belongs to the cytochrome c oxidase subunit 3 family. Component of the cytochrome c oxidase (complex IV, CIV), a multisubunit enzyme composed of a catalytic core of 3 subunits and several supernumerary subunits. The complex exists as a monomer or a dimer and forms supercomplexes (SCs) in the inner mitochondrial membrane with ubiquinol-cytochrome c oxidoreductase (cytochrome b-c1 complex, complex III, CIII).

It localises to the mitochondrion inner membrane. The enzyme catalyses 4 Fe(II)-[cytochrome c] + O2 + 8 H(+)(in) = 4 Fe(III)-[cytochrome c] + 2 H2O + 4 H(+)(out). In terms of biological role, component of the cytochrome c oxidase, the last enzyme in the mitochondrial electron transport chain which drives oxidative phosphorylation. The respiratory chain contains 3 multisubunit complexes succinate dehydrogenase (complex II, CII), ubiquinol-cytochrome c oxidoreductase (cytochrome b-c1 complex, complex III, CIII) and cytochrome c oxidase (complex IV, CIV), that cooperate to transfer electrons derived from NADH and succinate to molecular oxygen, creating an electrochemical gradient over the inner membrane that drives transmembrane transport and the ATP synthase. Cytochrome c oxidase is the component of the respiratory chain that catalyzes the reduction of oxygen to water. Electrons originating from reduced cytochrome c in the intermembrane space (IMS) are transferred via the dinuclear copper A center (CU(A)) of subunit 2 and heme A of subunit 1 to the active site in subunit 1, a binuclear center (BNC) formed by heme A3 and copper B (CU(B)). The BNC reduces molecular oxygen to 2 water molecules using 4 electrons from cytochrome c in the IMS and 4 protons from the mitochondrial matrix. The sequence is that of Cytochrome c oxidase subunit 3 (COX3) from Candida glabrata (strain ATCC 2001 / BCRC 20586 / JCM 3761 / NBRC 0622 / NRRL Y-65 / CBS 138) (Yeast).